A 125-amino-acid polypeptide reads, in one-letter code: Steroid Delta-isomerase (125 aa).

Tyrosine 14 (proton donor) is an active-site residue. The active-site Proton acceptor is aspartate 38. Aspartate 99 serves as a coordination point for substrate.

As to quaternary structure, homodimer.

It catalyses the reaction a 3-oxo-Delta(5)-steroid = a 3-oxo-Delta(4)-steroid. This is Steroid Delta-isomerase (ksi) from Comamonas testosteroni (Pseudomonas testosteroni).